A 241-amino-acid chain; its full sequence is 2,3,4,5-tetrahydropyridine-2,6-dicarboxylate N-acetyltransferase (241 aa).

This sequence belongs to the transferase hexapeptide repeat family. DapH subfamily.

It catalyses the reaction (S)-2,3,4,5-tetrahydrodipicolinate + acetyl-CoA + H2O = L-2-acetamido-6-oxoheptanedioate + CoA. It participates in amino-acid biosynthesis; L-lysine biosynthesis via DAP pathway; LL-2,6-diaminopimelate from (S)-tetrahydrodipicolinate (acetylase route): step 1/3. In terms of biological role, catalyzes the transfer of an acetyl group from acetyl-CoA to tetrahydrodipicolinate. The sequence is that of 2,3,4,5-tetrahydropyridine-2,6-dicarboxylate N-acetyltransferase from Caldanaerobacter subterraneus subsp. tengcongensis (strain DSM 15242 / JCM 11007 / NBRC 100824 / MB4) (Thermoanaerobacter tengcongensis).